A 122-amino-acid chain; its full sequence is UPF0102 protein XCV0816 (122 aa).

It belongs to the UPF0102 family.

The chain is UPF0102 protein XCV0816 from Xanthomonas euvesicatoria pv. vesicatoria (strain 85-10) (Xanthomonas campestris pv. vesicatoria).